We begin with the raw amino-acid sequence, 403 residues long: Decapping and exoribonuclease protein 1 (403 aa).

Glutamate 223 provides a ligand contact to a divalent metal cation. Glutamate 260 contacts substrate. A divalent metal cation-binding residues include aspartate 262, glutamate 273, and isoleucine 274. Residues lysine 275 and glutamine 297 each contribute to the substrate site.

The protein belongs to the DXO/Dom3Z family. A divalent metal cation serves as cofactor.

It is found in the cytoplasm. It catalyses the reaction a 5'-end NAD(+)-phospho-ribonucleoside in mRNA + H2O = a 5'-end phospho-ribonucleoside in mRNA + NAD(+) + H(+). It carries out the reaction a 5'-end (N(7)-methyl 5'-triphosphoguanosine)-ribonucleoside-ribonucleotide in mRNA + H2O = a (N(7)-methyl 5'-triphosphoguanosine)-nucleoside + a 5'-end phospho-ribonucleoside in mRNA + H(+). In terms of biological role, decapping enzyme for NAD-capped RNAs: specifically hydrolyzes the nicotinamide adenine dinucleotide (NAD) cap from a subset of RNAs by removing the entire NAD moiety from the 5'-end of an NAD-capped RNA. The NAD-cap is present at the 5'-end of some RNAs and snoRNAs. In contrast to the canonical 5'-end N7 methylguanosine (m7G) cap, the NAD cap promotes mRNA decay. Also acts as a non-canonical decapping enzyme that removes the entire cap structure of m7G capped or incompletely capped RNAs and mediates their subsequent degradation. Has decapping and 5'-3' exonuclease activities. Has decapping activity toward incomplete 5'-end cap mRNAs such as unmethylated 5'-end-capped RNA to release GpppN and 5'-end monophosphate RNA. The 5'-end monophosphate RNA is then degraded by the 5'-3' exoribonuclease activity, enabling this enzyme to decap and degrade incompletely capped mRNAs. This is Decapping and exoribonuclease protein 1 from Kluyveromyces lactis (strain ATCC 8585 / CBS 2359 / DSM 70799 / NBRC 1267 / NRRL Y-1140 / WM37) (Yeast).